The primary structure comprises 239 residues: Transcriptional regulatory protein DcuR (239 aa).

Residues asparagine 3–arginine 121 form the Response regulatory domain. At aspartate 56 the chain carries 4-aspartylphosphate. Residues threonine 181–isoleucine 200 constitute a DNA-binding region (H-T-H motif).

Post-translationally, phosphorylated and activated by DcuS.

The protein resides in the cytoplasm. In terms of biological role, member of the two-component regulatory system DcuR/DcuS. Involved in the C4-dicarboxylate-stimulated regulation of the genes encoding the anaerobic fumarate respiratory system (frdABCD; nuoAN; dcuB; dcuC; sdhCDAB; etc.). Weakly regulates the aerobic C4-dicarboxylate transporter dctA. This chain is Transcriptional regulatory protein DcuR (dcuR), found in Escherichia coli O6:H1 (strain CFT073 / ATCC 700928 / UPEC).